A 480-amino-acid chain; its full sequence is Pyruvate kinase II (480 aa).

Position 36 (arginine 36) interacts with substrate. Residues asparagine 38, serine 40, and aspartate 70 each coordinate K(+). Position 38 to 41 (38 to 41 (NFSH)) interacts with ATP. ATP is bound by residues arginine 77 and lysine 160. Lysine 223 is a substrate binding site. Position 225 (glutamate 225) interacts with Mg(2+). Substrate-binding residues include glycine 251, aspartate 252, and threonine 284. Aspartate 252 contacts Mg(2+).

This sequence belongs to the pyruvate kinase family. In terms of assembly, homotetramer. The cofactor is Mg(2+). K(+) is required as a cofactor.

It catalyses the reaction pyruvate + ATP = phosphoenolpyruvate + ADP + H(+). It functions in the pathway carbohydrate degradation; glycolysis; pyruvate from D-glyceraldehyde 3-phosphate: step 5/5. With respect to regulation, allosterically activated by AMP and by several sugar phosphates. Belongs to type II PK. Its function is as follows. Catalyzes the formation of pyruvate in the last step of glycolysis, it is irreversible under physiological conditions. The reaction is critical for the control of metabolic flux in the second part of glycolysis. This is Pyruvate kinase II (pykA) from Salmonella typhimurium (strain LT2 / SGSC1412 / ATCC 700720).